We begin with the raw amino-acid sequence, 757 residues long: Catalase-peroxidase 2 (757 aa).

The first 26 residues, 1 to 26 (MKHPLFNQKVLAGFVSMLLISGSAFA), serve as a signal peptide directing secretion. The segment at residues 126–248 (WHSAGTYRTL…LGATHMGLIY (123 aa)) is a cross-link (tryptophyl-tyrosyl-methioninium (Trp-Tyr) (with M-274)). Catalysis depends on H127, which acts as the Proton acceptor. A cross-link (tryptophyl-tyrosyl-methioninium (Tyr-Met) (with W-126)) is located at residues 248 to 274 (YVNPEGPKGVPDPLGSAKNIRVAFERM). Position 289 (H289) interacts with heme b.

This sequence belongs to the peroxidase family. Peroxidase/catalase subfamily. Homodimer or homotetramer. It depends on heme b as a cofactor. Post-translationally, formation of the three residue Trp-Tyr-Met cross-link is important for the catalase, but not the peroxidase activity of the enzyme.

It catalyses the reaction H2O2 + AH2 = A + 2 H2O. It carries out the reaction 2 H2O2 = O2 + 2 H2O. Bifunctional enzyme with both catalase and broad-spectrum peroxidase activity. This chain is Catalase-peroxidase 2, found in Shewanella frigidimarina (strain NCIMB 400).